The following is a 553-amino-acid chain: Membrane protein insertase YidC (553 aa).

5 helical membrane passes run 7–24, 365–385, 435–455, 474–494, and 509–529; these read VLWVIFFMSAVMLYDNWQ, WGWAIVLLTVLIKAVFFPLSA, LPVVIQIPVFISLYWVLLASV, PFFILPVLMAVSMFVQTSLNP, and PIAFSVMFFFFPAGLVLYYVV.

Belongs to the OXA1/ALB3/YidC family. Type 1 subfamily. Interacts with the Sec translocase complex via SecD. Specifically interacts with transmembrane segments of nascent integral membrane proteins during membrane integration.

The protein resides in the cell inner membrane. Required for the insertion and/or proper folding and/or complex formation of integral membrane proteins into the membrane. Involved in integration of membrane proteins that insert both dependently and independently of the Sec translocase complex, as well as at least some lipoproteins. Aids folding of multispanning membrane proteins. The sequence is that of Membrane protein insertase YidC from Burkholderia orbicola (strain MC0-3).